A 397-amino-acid polypeptide reads, in one-letter code: Purine ribonucleoside efflux pump NepI (397 aa).

Residues 1–21 (MNENIAEKFRADGVARPNWSA) lie on the Cytoplasmic side of the membrane. Residues 22 to 42 (VFAVAFCVACLITVEFLPVSL) traverse the membrane as a helical segment. Residues 43–54 (LTPMAQDLGISE) lie on the Periplasmic side of the membrane. The chain crosses the membrane as a helical span at residues 55 to 75 (GVAGQSVTVTAFVAMFSSLFI). The Cytoplasmic portion of the chain corresponds to 76 to 85 (TQIIQATDRR). A helical transmembrane segment spans residues 86-106 (YIVILFAVLLTASCLMVSFAN). A topological domain (periplasmic) is located at residue S107. The helical transmembrane segment at 108–128 (FTLLLLGRACLGLALGGFWAI) threads the bilayer. At 129–147 (SASLTMRLVPARTVPKALS) the chain is on the cytoplasmic side. The helical transmembrane segment at 148–168 (VIFGAVSIALVIAAPLGSFLG) threads the bilayer. Residues 169-175 (GIIGWRN) are Periplasmic-facing. Residues 176-196 (VFNAAAVMGVLCVIWVVKSLP) form a helical membrane-spanning segment. Residues 197 to 215 (SLPGEPSHQKQNMFSLLQR) are Cytoplasmic-facing. Residues 216 to 236 (PGVMAGMIAIFMSFAGQFAFF) form a helical membrane-spanning segment. The Periplasmic segment spans residues 237–255 (TYIRPVYMNLAGFDVDGLT). Residues 256 to 276 (LVLLSFGIASFVGTSFSSYVL) traverse the membrane as a helical segment. Residues 277-281 (KRSVK) are Cytoplasmic-facing. The helical transmembrane segment at 282–302 (LALAGAPLLLALSALTLIVWG) threads the bilayer. At 303-305 (SDK) the chain is on the periplasmic side. A helical transmembrane segment spans residues 306–326 (TVAAAIAIIWGLAFALVPVGW). Residues 327–343 (STWITRSLADQAEKAGS) are Cytoplasmic-facing. The chain crosses the membrane as a helical span at residues 344-364 (IQVAVIQLANTCGAAVGGYAL). The Periplasmic portion of the chain corresponds to 365–366 (DN). The chain crosses the membrane as a helical span at residues 367-387 (FGLLSPLALSGGLMLLTALVV). The Cytoplasmic segment spans residues 388–397 (AAKVRITPMS).

This sequence belongs to the major facilitator superfamily. DHA1 family. NepI (TC 2.A.1.2.26) subfamily.

It is found in the cell inner membrane. The enzyme catalyses inosine(in) + H(+)(out) = inosine(out) + H(+)(in). It carries out the reaction guanosine(in) + H(+)(out) = guanosine(out) + H(+)(in). Its function is as follows. Involved in the efflux of purine ribonucleosides, such as inosine and guanosine. The chain is Purine ribonucleoside efflux pump NepI from Salmonella paratyphi A (strain ATCC 9150 / SARB42).